Here is a 589-residue protein sequence, read N- to C-terminus: Transcription factor 4 (589 aa).

Disordered regions lie at residues 1-124 (MTSR…SSSK), 138-163 (DGHH…MLGN), 184-239 (PSHS…SQTG), 254-297 (HTNN…EGPL), 384-492 (SLLP…MANN), and 556-589 (KRRE…MGQM). Residues Ser8 and Ser13 each carry the phosphoserine modification. The span at 56-74 (GTLSPTKPGSQYYPYSSNN) shows a compositional bias: polar residues. Residues 136–157 (MQDGHHSSDPWSSSSGMNQPGY) form a leucine-zipper region. The segment covering 184–224 (PSHSSADINSSLPPMSTFHRSGTNHYSTSSCTPPANGTDSI) has biased composition (polar residues). The segment covering 255–266 (TNNSFSSNPSTP) has biased composition (low complexity). Residues 283 to 292 (NGGQASSSPN) show a composition bias toward polar residues. Ser290 is subject to Phosphoserine. The interval 380-403 (RGSHSLLPNQVPVPQLPVQSATSP) is class A specific domain. 2 stretches are compositionally biased toward low complexity: residues 385 to 398 (LLPN…LPVQ) and 421 to 430 (GQSVSSGSSE). Ser433 carries the phosphoserine modification. Composition is skewed to basic and acidic residues over residues 445 to 461 (KSSE…DIKS) and 477 to 492 (PEQK…MANN). One can recognise a bHLH domain in the interval 486–539 (ERRMANNARERLRVRDINEAFKELGRMVQLHLKSDKPQTKLLILHQAVAVILSL).

As to quaternary structure, efficient DNA binding requires dimerization with another bHLH protein. Forms homo- or heterooligomers with myogenin. Interacts with HIVEP2. Interacts with NEUROD2. Interacts with AGBL1.

The protein localises to the nucleus. Functionally, transcription factor that binds to the immunoglobulin enhancer Mu-E5/KE5-motif. Involved in the initiation of neuronal differentiation. Activates transcription by binding to the E box (5'-CANNTG-3'). Binds to the E-box present in the somatostatin receptor 2 initiator element (SSTR2-INR) to activate transcription. Interacts with the CCAAT displacement protein (CDP2) to bind the tyrosine hydroxylase enhancer. In Rattus norvegicus (Rat), this protein is Transcription factor 4 (Tcf4).